A 285-amino-acid chain; its full sequence is Eukaryotic translation initiation factor 3 subunit F-2 (285 aa).

The region spanning Val11–Gly145 is the MPN domain.

The protein belongs to the eIF-3 subunit F family. Component of the eukaryotic translation initiation factor 3 (eIF-3) complex. The eIF-3 complex interacts with pix.

It localises to the cytoplasm. Component of the eukaryotic translation initiation factor 3 (eIF-3) complex, which is involved in protein synthesis of a specialized repertoire of mRNAs and, together with other initiation factors, stimulates binding of mRNA and methionyl-tRNAi to the 40S ribosome. The eIF-3 complex specifically targets and initiates translation of a subset of mRNAs involved in cell proliferation. The sequence is that of Eukaryotic translation initiation factor 3 subunit F-2 from Drosophila simulans (Fruit fly).